A 67-amino-acid chain; its full sequence is uncharacterized protein (67 aa).

2 helical membrane-spanning segments follow: residues 10–30 (EFFI…ITMW) and 40–60 (LMVG…WMVF).

The protein belongs to the plectrovirus ORF10 family.

The protein resides in the host membrane. This is an uncharacterized protein from Spiroplasma citri (SpV1).